We begin with the raw amino-acid sequence, 950 residues long: UPF0182 protein P9303_14611 (950 aa).

A run of 9 helical transmembrane segments spans residues 20–40, 53–73, 102–122, 141–161, 173–193, 209–229, 259–279, 308–328, and 335–355; these read LLLSIAAFWLLMRVQVEWLWF, WLWQLGGLLLALLVVATCQLW, LLGCFVVVVGDLVLLTRLAWL, IWALVIPLSCVFISICVMLGN, CFCFSISIARGWGLWSLALAI, FGLGQFPALAFALVVLLAQLV, CDVMRPLIGIILLTLSALLWL, SLASLAILVLAFLVIPFPWIQ, and LIASIIGVGAILLEVLLAPFV.

Belongs to the UPF0182 family.

Its subcellular location is the cell membrane. The chain is UPF0182 protein P9303_14611 from Prochlorococcus marinus (strain MIT 9303).